A 119-amino-acid chain; its full sequence is GGLGGGCGRGFSGGGLPVATASAAPTGLGIASENRYEGTVGVCGNLPFLGTADVAGEFPTAGIGEIDYGCGNGAVGITREGGLGYGAGYGDGYGLGYGGYGGGYGLGYGGYGGCGCGCG.

A left arm region spans residues 1–11 (GGLGGGCGRGF). A central domain region spans residues 12-80 (SGGGLPVATA…GNGAVGITRE (69 aa)). Positions 81–119 (GGLGYGAGYGDGYGLGYGGYGGGYGLGYGGYGGCGCGCG) are right arm (Gly-rich tandem repeats).

It belongs to the chorion protein family.

In terms of biological role, this protein is one of many from the eggshell of the silk moth. The chain is Chorion class B protein M2807 from Bombyx mori (Silk moth).